The primary structure comprises 485 residues: Glutamyl-tRNA(Gln) amidotransferase subunit A (485 aa).

Catalysis depends on charge relay system residues lysine 78 and serine 153. Serine 177 (acyl-ester intermediate) is an active-site residue.

Belongs to the amidase family. GatA subfamily. As to quaternary structure, heterotrimer of A, B and C subunits.

It catalyses the reaction L-glutamyl-tRNA(Gln) + L-glutamine + ATP + H2O = L-glutaminyl-tRNA(Gln) + L-glutamate + ADP + phosphate + H(+). Allows the formation of correctly charged Gln-tRNA(Gln) through the transamidation of misacylated Glu-tRNA(Gln) in organisms which lack glutaminyl-tRNA synthetase. The reaction takes place in the presence of glutamine and ATP through an activated gamma-phospho-Glu-tRNA(Gln). The chain is Glutamyl-tRNA(Gln) amidotransferase subunit A from Pelobacter propionicus (strain DSM 2379 / NBRC 103807 / OttBd1).